Here is a 59-residue protein sequence, read N- to C-terminus: Conotoxin Bu1.2 (59 aa).

The N-terminal stretch at 1–16 is a signal peptide; that stretch reads MFTVFLLVVLATTVVS. A propeptide spanning residues 17–42 is cleaved from the precursor; that stretch reads FSTDDESDGSNEEPSADQAARSAMNR. Positions 18–43 are disordered; the sequence is STDDESDGSNEEPSADQAARSAMNRP. Over residues 19-31 the composition is skewed to acidic residues; sequence TDDESDGSNEEPS. 2 cysteine pairs are disulfide-bonded: Cys-46–Cys-52 and Cys-47–Cys-57. A Glycine amide modification is found at Gly-58.

Belongs to the conotoxin A superfamily. As to expression, expressed by the venom duct.

The protein localises to the secreted. The sequence is that of Conotoxin Bu1.2 from Conus bullatus (Bubble cone).